Consider the following 282-residue polypeptide: NH(3)-dependent NAD(+) synthetase (282 aa).

Residue 51–58 (GISGGVDS) participates in ATP binding. Residue aspartate 57 participates in Mg(2+) binding. Deamido-NAD(+) is bound at residue arginine 148. Threonine 168 is an ATP binding site. Glutamate 173 is a Mg(2+) binding site. Positions 181 and 188 each coordinate deamido-NAD(+). ATP contacts are provided by lysine 197 and threonine 219. 268–269 (HK) is a deamido-NAD(+) binding site.

Belongs to the NAD synthetase family. As to quaternary structure, homodimer.

The catalysed reaction is deamido-NAD(+) + NH4(+) + ATP = AMP + diphosphate + NAD(+) + H(+). It functions in the pathway cofactor biosynthesis; NAD(+) biosynthesis; NAD(+) from deamido-NAD(+) (ammonia route): step 1/1. In terms of biological role, catalyzes the ATP-dependent amidation of deamido-NAD to form NAD. Uses ammonia as a nitrogen source. This chain is NH(3)-dependent NAD(+) synthetase, found in Burkholderia ambifaria (strain MC40-6).